The sequence spans 355 residues: U5 small nuclear ribonucleoprotein 40 kDa protein (355 aa).

WD repeat units follow at residues 60-99 (GHKG…INYS), 103-142 (GHKG…LIKR), 145-185 (EHSG…STHL), 187-226 (QHKY…DPLY), 230-269 (SHQD…PPNR), 280-319 (NFEK…LQYC), and 322-355 (GHSG…EIKP).

As to quaternary structure, component of the pre-catalytic and catalytic spliceosome complexes. Component of the postcatalytic spliceosome P complex. Part of the U5 snRNP complex. Component of the U4/U6-U5 tri-snRNP complex.

The protein resides in the nucleus. Functionally, required for pre-mRNA splicing as component of the activated spliceosome. Component of the U5 small nuclear ribonucleoprotein (snRNP) complex and the U4/U6-U5 tri-snRNP complex, building blocks of the spliceosome. This is U5 small nuclear ribonucleoprotein 40 kDa protein (snrnp40) from Dictyostelium discoideum (Social amoeba).